The sequence spans 411 residues: LL-diaminopimelate aminotransferase (411 aa).

Substrate contacts are provided by Tyr-15 and Gly-42. Pyridoxal 5'-phosphate-binding positions include Tyr-72, 108–109 (AK), Tyr-132, Asn-187, Tyr-218, and 246–248 (SFS). 3 residues coordinate substrate: Lys-109, Tyr-132, and Asn-187. Residue Lys-249 is modified to N6-(pyridoxal phosphate)lysine. Positions 257 and 292 each coordinate pyridoxal 5'-phosphate. The substrate site is built by Asn-292 and Arg-388.

Belongs to the class-I pyridoxal-phosphate-dependent aminotransferase family. LL-diaminopimelate aminotransferase subfamily. As to quaternary structure, homodimer. The cofactor is pyridoxal 5'-phosphate.

The enzyme catalyses (2S,6S)-2,6-diaminopimelate + 2-oxoglutarate = (S)-2,3,4,5-tetrahydrodipicolinate + L-glutamate + H2O + H(+). The protein operates within amino-acid biosynthesis; L-lysine biosynthesis via DAP pathway; LL-2,6-diaminopimelate from (S)-tetrahydrodipicolinate (aminotransferase route): step 1/1. In terms of biological role, involved in the synthesis of meso-diaminopimelate (m-DAP or DL-DAP), required for both lysine and peptidoglycan biosynthesis. Catalyzes the direct conversion of tetrahydrodipicolinate to LL-diaminopimelate. This is LL-diaminopimelate aminotransferase from Crocosphaera subtropica (strain ATCC 51142 / BH68) (Cyanothece sp. (strain ATCC 51142)).